Here is a 574-residue protein sequence, read N- to C-terminus: Probable cytochrome c oxidase subunit 1 (574 aa).

The chain crosses the membrane as a helical span at residues 40 to 60 (IGIMYCVACFIFFFVGGLLAL). H86 is a binding site for Fe(II)-heme a. A run of 6 helical transmembrane segments spans residues 89 to 109 (IMLLFYATPIVFGFANLVLPL), 121 to 141 (LNAFSFWLFLFGAAIGMAGFI), 170 to 190 (LWIMGLIVAGLGTILGAVNMI), 213 to 233 (ILVTSILVLIAFPLLTAALFG), 258 to 278 (LFWFFGHPEVYIIALPFFGIV), and 290 to 310 (IFGYTTLVYATLSIAALSVAV). Residues H264 and Y268 each coordinate Cu cation. The segment at residues 264-268 (HPEVY) is a cross-link (1'-histidyl-3'-tyrosine (His-Tyr)). Residues H313 and H314 each contribute to the Cu cation site. 2 consecutive transmembrane segments (helical) span residues 315–335 (MFATGAVLLPFFSFMTYLIAV) and 359–379 (MLFSVGFAVTFLLGGLTGVLL). H397 serves as a coordination point for heme a3. Helical transmembrane passes span 398 to 418 (FHYVLFGTIVFSTFAGIYFWF), 433 to 453 (LHFWLTFIGFHTTFLVQHWLG), and 476 to 496 (VSTIGSFILGASMFPFVWNVF). H399 provides a ligand contact to Fe(II)-heme a.

It belongs to the heme-copper respiratory oxidase family. In terms of assembly, associates with subunits II, III and IV to form cytochrome c oxidase. It depends on Cu(2+) as a cofactor. Requires heme as cofactor.

The protein resides in the cell membrane. It catalyses the reaction 4 Fe(II)-[cytochrome c] + O2 + 8 H(+)(in) = 4 Fe(III)-[cytochrome c] + 2 H2O + 4 H(+)(out). The protein operates within energy metabolism; oxidative phosphorylation. Its function is as follows. Cytochrome c oxidase is the component of the respiratory chain that catalyzes the reduction of oxygen to water. Subunits 1-3 form the functional core of the enzyme complex. CO I is the catalytic subunit of the enzyme. Electrons originating in cytochrome c are transferred via the copper A center of subunit 2 and heme A of subunit 1 to the bimetallic center formed by heme A3 and copper B. In Mycobacterium leprae (strain TN), this protein is Probable cytochrome c oxidase subunit 1 (ctaD).